Reading from the N-terminus, the 513-residue chain is ATP synthase subunit alpha (513 aa).

169-176 (GDRQTGKT) contributes to the ATP binding site.

It belongs to the ATPase alpha/beta chains family. As to quaternary structure, F-type ATPases have 2 components, CF(1) - the catalytic core - and CF(0) - the membrane proton channel. CF(1) has five subunits: alpha(3), beta(3), gamma(1), delta(1), epsilon(1). CF(0) has three main subunits: a(1), b(2) and c(9-12). The alpha and beta chains form an alternating ring which encloses part of the gamma chain. CF(1) is attached to CF(0) by a central stalk formed by the gamma and epsilon chains, while a peripheral stalk is formed by the delta and b chains.

It localises to the cell inner membrane. The catalysed reaction is ATP + H2O + 4 H(+)(in) = ADP + phosphate + 5 H(+)(out). In terms of biological role, produces ATP from ADP in the presence of a proton gradient across the membrane. The alpha chain is a regulatory subunit. The polypeptide is ATP synthase subunit alpha (Pasteurella multocida (strain Pm70)).